Here is a 435-residue protein sequence, read N- to C-terminus: ATP-dependent protease ATPase subunit HslU (435 aa).

Residues Ile-18, 60–65 (GVGKTE), Asp-248, Glu-313, and Arg-385 each bind ATP.

This sequence belongs to the ClpX chaperone family. HslU subfamily. As to quaternary structure, a double ring-shaped homohexamer of HslV is capped on each side by a ring-shaped HslU homohexamer. The assembly of the HslU/HslV complex is dependent on binding of ATP.

The protein localises to the cytoplasm. In terms of biological role, ATPase subunit of a proteasome-like degradation complex; this subunit has chaperone activity. The binding of ATP and its subsequent hydrolysis by HslU are essential for unfolding of protein substrates subsequently hydrolyzed by HslV. HslU recognizes the N-terminal part of its protein substrates and unfolds these before they are guided to HslV for hydrolysis. The sequence is that of ATP-dependent protease ATPase subunit HslU from Rhizobium johnstonii (strain DSM 114642 / LMG 32736 / 3841) (Rhizobium leguminosarum bv. viciae).